The sequence spans 307 residues: Acetaldehyde dehydrogenase (307 aa).

An NAD(+)-binding site is contributed by 12–15 (SGNI). Residue Cys-127 is the Acyl-thioester intermediate of the active site. Residues 158–166 (SAGPGTRQN) and Asn-278 contribute to the NAD(+) site.

It belongs to the acetaldehyde dehydrogenase family. In terms of assembly, monomer. Can also form a heterotetramer composed of two aldolase (TTHB246) and two dehydrogenase (TTHB247) subunits. Upon complex formation, the aldolase shows a 5-fold increase in substrate affinity, while the dehydrogenase shows a 3-fold decrease; the kcat values of each enzyme are reduced by 2-fold when they are in a complex.

It carries out the reaction acetaldehyde + NAD(+) + CoA = acetyl-CoA + NADH + H(+). The enzyme catalyses propanal + NAD(+) + CoA = propanoyl-CoA + NADH + H(+). Catalyzes the conversion of acetaldehyde or propanal to acetyl-CoA or propanoyl-CoA, respectively, using NAD(+) and coenzyme A. The aldehyde substrates can be directly channeled from the aldolase TTHB246 to the dehydrogenase TTHB247. Is the final enzyme in the meta-cleavage pathway for the degradation of aromatic compounds. This Thermus thermophilus (strain ATCC 27634 / DSM 579 / HB8) protein is Acetaldehyde dehydrogenase.